We begin with the raw amino-acid sequence, 454 residues long: tRNA modification GTPase MnmE (454 aa).

(6S)-5-formyl-5,6,7,8-tetrahydrofolate contacts are provided by Arg23, Glu80, and Lys120. Positions 216-377 constitute a TrmE-type G domain; it reads GMKVVIAGRP…LRNHLKQSMG (162 aa). Residue Asn226 coordinates K(+). GTP-binding positions include 226–231, 245–251, 270–273, 335–338, and 358–360; these read NAGKSS, TDIAGTT, DTAG, NKAD, and SAR. Residue Ser230 coordinates Mg(2+). K(+) contacts are provided by Thr245, Ile247, and Thr250. Position 251 (Thr251) interacts with Mg(2+). Lys454 is a binding site for (6S)-5-formyl-5,6,7,8-tetrahydrofolate.

The protein belongs to the TRAFAC class TrmE-Era-EngA-EngB-Septin-like GTPase superfamily. TrmE GTPase family. In terms of assembly, homodimer. Heterotetramer of two MnmE and two MnmG subunits. Requires K(+) as cofactor.

It localises to the cytoplasm. In terms of biological role, exhibits a very high intrinsic GTPase hydrolysis rate. Involved in the addition of a carboxymethylaminomethyl (cmnm) group at the wobble position (U34) of certain tRNAs, forming tRNA-cmnm(5)s(2)U34. This is tRNA modification GTPase MnmE from Escherichia coli (strain 55989 / EAEC).